The sequence spans 248 residues: MRTLILLIQFFTRIPLPIQINMDEINLKKGSALLPFVGVIIGAWNWLIFTLVSLVMPLPVAIIAGLFAEIIITGGFHVDALADTADGLFSSRKRERMLEIMKDSRVGANGVIAICFYFLFYGALFLSVPDTQQIGWLFFVLPIVAKGVTMLLFAKMTYAGSKEGLGSIFLGVPWWPIVIAQVIVLVALGAFFSYIGVIAYAGVILFTIIYRAFVYKRIGGMNGDTLGAGGQMGQLICLFCLVLLWGLI.

The next 7 helical transmembrane spans lie at 24–44 (EINLKKGSALLPFVGVIIGAW), 70–90 (IIITGGFHVDALADTADGLFS), 106–126 (VGANGVIAICFYFLFYGALFL), 134–154 (IGWLFFVLPIVAKGVTMLLFA), 168–188 (IFLGVPWWPIVIAQVIVLVAL), 189–209 (GAFFSYIGVIAYAGVILFTII), and 228–248 (AGGQMGQLICLFCLVLLWGLI).

Belongs to the CobS family. The cofactor is Mg(2+).

The protein resides in the cell membrane. It catalyses the reaction alpha-ribazole + adenosylcob(III)inamide-GDP = adenosylcob(III)alamin + GMP + H(+). It carries out the reaction alpha-ribazole 5'-phosphate + adenosylcob(III)inamide-GDP = adenosylcob(III)alamin 5'-phosphate + GMP + H(+). Its pathway is cofactor biosynthesis; adenosylcobalamin biosynthesis; adenosylcobalamin from cob(II)yrinate a,c-diamide: step 7/7. In terms of biological role, joins adenosylcobinamide-GDP and alpha-ribazole to generate adenosylcobalamin (Ado-cobalamin). Also synthesizes adenosylcobalamin 5'-phosphate from adenosylcobinamide-GDP and alpha-ribazole 5'-phosphate. The chain is Adenosylcobinamide-GDP ribazoletransferase from Listeria monocytogenes serotype 4a (strain HCC23).